A 254-amino-acid polypeptide reads, in one-letter code: MSDPRHIAIIMDGNGRWAKARGLPRSAGHRAGVEALREIVRAAGDRGLGYLTLFAFSSENWTRPSGEVSDLLGLLKLFIRRDLAELHRNNVRVNIIGERAELAANIRALLNEAESLTHRNTGLNLVIAFNYGSRDEIVRAVRSLARDVAAGLLDPSSISAELVSANLDTAGIPDPDLIIRTSGEMRLSNFLLWQAAYSEFLFLPCHWPDFRPADLDAAYETFRQRERRFGGVEPRASADAEEEILCPSTKGAAV.

Residue D12 is part of the active site. Mg(2+) is bound at residue D12. Substrate-binding positions include 13 to 16 (GNGR), W17, R25, H29, and 57 to 59 (SSE). Residue N60 is the Proton acceptor of the active site. Substrate is bound by residues W61, R63, R180, and 186 to 188 (RLS). Position 199 (E199) interacts with Mg(2+).

This sequence belongs to the UPP synthase family. In terms of assembly, homodimer. Mg(2+) serves as cofactor.

Its function is as follows. Catalyzes the condensation of isopentenyl diphosphate (IPP) with allylic pyrophosphates generating different type of terpenoids. The chain is Isoprenyl transferase from Brucella abortus biovar 1 (strain 9-941).